Here is a 312-residue protein sequence, read N- to C-terminus: Non-structural protein 12A (312 aa).

The span at 1-23 (MFKSGSGSLKRSGSISSVKSFSG) shows a compositional bias: low complexity. 3 disordered regions span residues 1–37 (MFKS…RGSV), 62–99 (FVPE…QNAD), and 111–161 (ESSK…GTGD). Positions 63–77 (VPEKTKSEGNLKDKS) are enriched in basic and acidic residues. A compositionally biased stretch (polar residues) spans 78–98 (SVITGNFGSSGPINAHTNQNA). Positions 122 to 134 (DARHTATDSRLSQ) are enriched in basic and acidic residues.

Belongs to the phytoreovirus non-structural protein Pns12A family.

The protein localises to the host cytoplasm. Its function is as follows. Constituent of viral factories. Binds to ssRNA and dsRNA. The protein is Non-structural protein 12A of Alopecurus aequalis (Barnyard grass).